Consider the following 142-residue polypeptide: MVLSAADKTNVKAAWSKVGGHAGEYGAEALERMFLGFPTTKTYFPHFDLSHGSAQVKAHGKKVGDALTLAVGHLDDLPGALSNLSDLHAHKLRVDPVNFKLLSHCLLSTLAVHLPNDFTPAVHASLDKFLSSVSTVLTSKYR.

One can recognise a Globin domain in the interval 2–142 (VLSAADKTNV…VSTVLTSKYR (141 aa)). S4 bears the Phosphoserine mark. An N6-succinyllysine modification is found at K8. Residue T9 is modified to Phosphothreonine. Position 12 is an N6-succinyllysine (K12). The residue at position 17 (K17) is an N6-acetyllysine; alternate. N6-succinyllysine; alternate is present on K17. Residue Y25 is modified to Phosphotyrosine. At K41 the chain carries N6-succinyllysine. At S50 the chain carries Phosphoserine. Position 59 (H59) interacts with O2. H88 lines the heme b pocket. A Phosphoserine modification is found at S103. At T109 the chain carries Phosphothreonine. Residues S125 and S132 each carry the phosphoserine modification. Phosphothreonine occurs at positions 135 and 138. Residue S139 is modified to Phosphoserine.

The protein belongs to the globin family. In terms of assembly, heterotetramer of two alpha chains and two beta chains. Red blood cells.

In terms of biological role, involved in oxygen transport from the lung to the various peripheral tissues. Hemopressin acts as an antagonist peptide of the cannabinoid receptor CNR1. Hemopressin-binding efficiently blocks cannabinoid receptor CNR1 and subsequent signaling. The polypeptide is Hemoglobin subunit alpha (HBA) (Equus caballus (Horse)).